The chain runs to 122 residues: Large ribosomal subunit protein uL18 (122 aa).

It belongs to the universal ribosomal protein uL18 family. As to quaternary structure, part of the 50S ribosomal subunit; part of the 5S rRNA/L5/L18/L25 subcomplex. Contacts the 5S and 23S rRNAs.

In terms of biological role, this is one of the proteins that bind and probably mediate the attachment of the 5S RNA into the large ribosomal subunit, where it forms part of the central protuberance. The chain is Large ribosomal subunit protein uL18 from Prochlorococcus marinus (strain MIT 9301).